We begin with the raw amino-acid sequence, 426 residues long: uncharacterized protein (426 aa).

Belongs to the serpin family.

This is an uncharacterized protein from Methanosarcina mazei (strain ATCC BAA-159 / DSM 3647 / Goe1 / Go1 / JCM 11833 / OCM 88) (Methanosarcina frisia).